A 353-amino-acid chain; its full sequence is Photosystem II D2 protein (353 aa).

N-acetylthreonine is present on Thr2. A Phosphothreonine modification is found at Thr2. The chain crosses the membrane as a helical span at residues 41 to 61 (CAYFALGGWFTGTTFVTSWYT). His118 contacts chlorophyll a. The chain crosses the membrane as a helical span at residues 125 to 141 (GFMLRQFELARSVQLRP). The pheophytin a site is built by Gln130 and Asn143. The helical transmembrane segment at 153–166 (VFVSVFLIYPLGQS) threads the bilayer. Position 198 (His198) interacts with chlorophyll a. Residues 208 to 228 (AALLCAIHGATVENTLFEDGD) form a helical membrane-spanning segment. A plastoquinone-binding residues include His215 and Phe262. His215 is a Fe cation binding site. His269 is a binding site for Fe cation. The chain crosses the membrane as a helical span at residues 279–295 (GLWMSAIGVVGLALNLR).

Belongs to the reaction center PufL/M/PsbA/D family. PSII is composed of 1 copy each of membrane proteins PsbA, PsbB, PsbC, PsbD, PsbE, PsbF, PsbH, PsbI, PsbJ, PsbK, PsbL, PsbM, PsbT, PsbX, PsbY, PsbZ, Psb30/Ycf12, at least 3 peripheral proteins of the oxygen-evolving complex and a large number of cofactors. It forms dimeric complexes. The D1/D2 heterodimer binds P680, chlorophylls that are the primary electron donor of PSII, and subsequent electron acceptors. It shares a non-heme iron and each subunit binds pheophytin, quinone, additional chlorophylls, carotenoids and lipids. There is also a Cl(-1) ion associated with D1 and D2, which is required for oxygen evolution. The PSII complex binds additional chlorophylls, carotenoids and specific lipids. is required as a cofactor.

It is found in the plastid. The protein resides in the chloroplast thylakoid membrane. It carries out the reaction 2 a plastoquinone + 4 hnu + 2 H2O = 2 a plastoquinol + O2. Photosystem II (PSII) is a light-driven water:plastoquinone oxidoreductase that uses light energy to abstract electrons from H(2)O, generating O(2) and a proton gradient subsequently used for ATP formation. It consists of a core antenna complex that captures photons, and an electron transfer chain that converts photonic excitation into a charge separation. The D1/D2 (PsbA/PsbD) reaction center heterodimer binds P680, the primary electron donor of PSII as well as several subsequent electron acceptors. D2 is needed for assembly of a stable PSII complex. The protein is Photosystem II D2 protein of Cryptomeria japonica (Japanese cedar).